Reading from the N-terminus, the 400-residue chain is Selection and upkeep of intraepithelial T-cells protein 2 (400 aa).

A signal peptide spans 1 to 21 (MGATGVLLCVVLHFLQMVTQS). Over 22–240 (SEKFTVTGLQ…LSGELFSWKR (219 aa)) the chain is Extracellular. Residues 23–133 (EKFTVTGLQR…VGEFYEEHIT (111 aa)) enclose the Ig-like V-type domain. Cystine bridges form between Cys46–Cys120 and Cys160–Cys214. The Ig-like C1-type domain occupies 139–225 (ATSSVMYILM…LQNLLTHQEE (87 aa)). N-linked (GlcNAc...) asparagine glycosylation is present at Asn197. Residues 241–261 (VWIMILTTIGFMMIAFCMTYC) traverse the membrane as a helical segment. Topologically, residues 262–280 (VQQHLLYGTFSKGKCHWLK) are cytoplasmic. Residues 281–301 (STMIFMFSVIAVTGVMLILHL) form a helical membrane-spanning segment. Residues 302–321 (KQRVPVSDQHFELDTLWLED) lie on the Extracellular side of the membrane. Residues 322 to 342 (ISVILCVLIVFIIKLISFIYF) form a helical membrane-spanning segment. The Cytoplasmic portion of the chain corresponds to 343–400 (RLEGDHQGWSLPPYLSATPTAAICRLAVPEYSRGHLQLDSEDDLAGMGPSPFFITPCF).

This sequence belongs to the SKINT family. As to expression, expressed in skin, thymus and mammary gland.

It is found in the membrane. Its function is as follows. May act by engaging a cell surface molecule on immature T-cells in the embryonic thymus. This chain is Selection and upkeep of intraepithelial T-cells protein 2 (Skint2), found in Mus musculus (Mouse).